The sequence spans 142 residues: Ribosome maturation factor RimP (142 aa).

The protein belongs to the RimP family.

The protein resides in the cytoplasm. Functionally, required for maturation of 30S ribosomal subunits. In Sulfurovum sp. (strain NBC37-1), this protein is Ribosome maturation factor RimP.